The primary structure comprises 526 residues: WRKY transcription factor 72A (526 aa).

2 stretches are compositionally biased toward basic and acidic residues: residues 40–52 (KERK…DDNS) and 60–76 (LTGD…KADM). Disordered stretches follow at residues 40-76 (KERK…KADM) and 170-200 (SSTK…QTWP). The stretch at 62 to 106 (GDKKDDQLESAKADMEEVMEENQRLKKHLDKIMKDYRNLQMQFHE) forms a coiled coil. Residues 170–185 (SSTKSSPSNLSPENSL) are compositionally biased toward low complexity. The WRKY DNA-binding region spans 232-298 (CDTPTMNDGC…YEGTHNHPLP (67 aa)).

Belongs to the WRKY group II-b family. As to expression, expressed in roots, trichomes and fruits.

Its subcellular location is the nucleus. Its function is as follows. Transcription activator involved in the transcriptional regulation of terpene biosynthesis in glandular trichomes. Binds to the promoter of the linalool synthase TPS5 and promotes TPS5 gene transactivation. In association with WRKY72B, contributes to basal defense against root-knot nematodes (RKNs) and potato aphids, as well as Mi-1-mediated gene-for-gene resistance to these pests. Both WRKY72A and WRKY72B are not required for gene-for-gene resistance mediated by Pto, another tomato R gene. This Solanum lycopersicum (Tomato) protein is WRKY transcription factor 72A.